A 662-amino-acid chain; its full sequence is UPF0313 protein CPE1196 (662 aa).

Positions 296 to 567 (AIEEVKFSLV…AMQRALLQFK (272 aa)) constitute a Radical SAM core domain. 3 residues coordinate [4Fe-4S] cluster: cysteine 310, cysteine 314, and cysteine 317. The interval 597 to 662 (RDKNSFGKGN…QRGSKGKKRR (66 aa)) is disordered. The segment covering 618-632 (NRNENSGRRESEDKK) has biased composition (basic and acidic residues). A compositionally biased stretch (basic residues) spans 633 to 644 (RSSHSKKQRGNK).

This sequence belongs to the UPF0313 family. The cofactor is [4Fe-4S] cluster.

The protein is UPF0313 protein CPE1196 of Clostridium perfringens (strain 13 / Type A).